A 393-amino-acid polypeptide reads, in one-letter code: Probable acetyl-CoA acyltransferase (393 aa).

C88 (acyl-thioester intermediate) is an active-site residue. Catalysis depends on proton acceptor residues H349 and C378.

Belongs to the thiolase-like superfamily. Thiolase family.

The protein localises to the cytoplasm. The catalysed reaction is 2 acetyl-CoA = acetoacetyl-CoA + CoA. In Staphylococcus aureus (strain bovine RF122 / ET3-1), this protein is Probable acetyl-CoA acyltransferase.